The following is a 247-amino-acid chain: Membrane-spanning 4-domains subfamily A member 6D (247 aa).

The Cytoplasmic portion of the chain corresponds to 1 to 46; the sequence is MIPQVVTSETVTVISPNGISFPQTDKPQPSHQSQDSLKKHLKAEIK. A helical membrane pass occupies residues 47 to 67; that stretch reads VMAAIQIMCAVMVLSLGIILA. Residues 68-80 are Extracellular-facing; sequence SVPSNLHFTSVFS. Residues 81 to 101 traverse the membrane as a helical segment; sequence ILLESGYPFVGALFFAISGIL. At 102–121 the chain is on the cytoplasmic side; the sequence is SIVTEKKMTKPLVHSSLALS. A helical membrane pass occupies residues 122 to 142; the sequence is ILSVLSALTGIAILSVSLAAL. Over 143–180 the chain is Extracellular; that stretch reads EPALQQCKLAFTQLDTTQDAYHFFSPEPLNSCFVAKAA. Residues 181–201 form a helical membrane-spanning segment; that stretch reads LTGVFSLMLISSVLELGLAVL. Residues 202–247 are Cytoplasmic-facing; it reads TATLWWKQSSSAFSGNVIFLSQNSKNKSSVSSESLCNPTYENILTS. Position 235 is a phosphoserine (Ser235).

The protein belongs to the MS4A family. Expressed in thymus, spleen, intestine, colon, testis, heart, liver, brain, kidney, peripheral lymph node and bone marrow.

The protein localises to the membrane. In terms of biological role, may be involved in signal transduction as a component of a multimeric receptor complex. This is Membrane-spanning 4-domains subfamily A member 6D (Ms4a6d) from Mus musculus (Mouse).